The following is a 121-amino-acid chain: Phosphoribosyl-AMP cyclohydrolase (121 aa).

Position 76 (Asp76) interacts with Mg(2+). Cys77 is a Zn(2+) binding site. Mg(2+) contacts are provided by Asp78 and Asp80. The Zn(2+) site is built by Cys93 and Cys100.

Belongs to the PRA-CH family. Homodimer. Mg(2+) is required as a cofactor. The cofactor is Zn(2+).

The protein localises to the cytoplasm. The catalysed reaction is 1-(5-phospho-beta-D-ribosyl)-5'-AMP + H2O = 1-(5-phospho-beta-D-ribosyl)-5-[(5-phospho-beta-D-ribosylamino)methylideneamino]imidazole-4-carboxamide. The protein operates within amino-acid biosynthesis; L-histidine biosynthesis; L-histidine from 5-phospho-alpha-D-ribose 1-diphosphate: step 3/9. Its function is as follows. Catalyzes the hydrolysis of the adenine ring of phosphoribosyl-AMP. The protein is Phosphoribosyl-AMP cyclohydrolase of Methanococcoides burtonii (strain DSM 6242 / NBRC 107633 / OCM 468 / ACE-M).